A 468-amino-acid chain; its full sequence is Ribulose bisphosphate carboxylase large chain (468 aa).

Lys4 bears the N6,N6,N6-trimethyllysine mark. Substrate contacts are provided by Asn113 and Thr163. Lys165 (proton acceptor) is an active-site residue. Lys167 is a binding site for substrate. Mg(2+)-binding residues include Lys191, Asp193, and Glu194. Lys191 is modified (N6-carboxylysine). Catalysis depends on His284, which acts as the Proton acceptor. Positions 285, 317, and 369 each coordinate substrate.

It belongs to the RuBisCO large chain family. Type I subfamily. In terms of assembly, heterohexadecamer of 8 large chains and 8 small chains; disulfide-linked. The disulfide link is formed within the large subunit homodimers. Requires Mg(2+) as cofactor. The disulfide bond which can form in the large chain dimeric partners within the hexadecamer appears to be associated with oxidative stress and protein turnover.

The protein resides in the plastid. The protein localises to the chloroplast. It catalyses the reaction 2 (2R)-3-phosphoglycerate + 2 H(+) = D-ribulose 1,5-bisphosphate + CO2 + H2O. The enzyme catalyses D-ribulose 1,5-bisphosphate + O2 = 2-phosphoglycolate + (2R)-3-phosphoglycerate + 2 H(+). In terms of biological role, ruBisCO catalyzes two reactions: the carboxylation of D-ribulose 1,5-bisphosphate, the primary event in carbon dioxide fixation, as well as the oxidative fragmentation of the pentose substrate in the photorespiration process. Both reactions occur simultaneously and in competition at the same active site. This chain is Ribulose bisphosphate carboxylase large chain, found in Pandorea jasminoides (Bower vine).